Consider the following 837-residue polypeptide: Tuftelin-interacting protein 11 (837 aa).

2 stretches are compositionally biased toward basic and acidic residues: residues 1–13 (MSLSHLYRDGEGR) and 53–64 (VWAERDSDDERP). Disordered regions lie at residues 1–21 (MSLSHLYRDGEGRIDDDDDER), 53–72 (VWAERDSDDERPSFGGKRAR), and 85–133 (LKKG…KGFA). Residues 1 to 50 (MSLSHLYRDGEGRIDDDDDERENFEITDWDLQNEFNPNRQRHWQTKEEAT) form a required for interaction with DHX15 region. 3 positions are modified to phosphoserine: S2, S59, and S98. Residues 91-102 (EEAELEDSDDEE) show a composition bias toward acidic residues. Positions 103–116 (RPVKQDDFPKDFGP) are enriched in basic and acidic residues. Residue S144 is modified to Phosphoserine. The G-patch domain maps to 149 to 195 (TKGIGQKLLQKMGYVPGRGLGKNAQGIINPIEAKQRKGKGAVGAYGS). A disordered region spans residues 179–236 (IEAKQRKGKGAVGAYGSERTTQSMQDFPVVDSEEEAEEEFQKELSQWRKDPSGSKKKP). Phosphoserine is present on S210. Residues 217–231 (EFQKELSQWRKDPSG) are compositionally biased toward basic and acidic residues. The short motif at 700–705 (VKDKFN) is the Nuclear localization signal element. The interval 710 to 734 (IMNRAVSSNVGAYMQPGARENIAYL) is required for nuclear speckle localization.

This sequence belongs to the TFP11/STIP family. In terms of assembly, identified in the spliceosome C complex. Found in the Intron Large (IL) complex, a post-mRNA release spliceosomal complex containing the excised intron, U2, U5 and U6 snRNPs, and splicing factors. Interacts with TUFT1. Interacts with DHX15; indicative for a recruitment of DHX15 to the IL complex. Interacts with GCFC2.

Its subcellular location is the cytoplasm. The protein localises to the nucleus. Its function is as follows. Involved in pre-mRNA splicing, specifically in spliceosome disassembly during late-stage splicing events. Intron turnover seems to proceed through reactions in two lariat-intron associated complexes termed Intron Large (IL) and Intron Small (IS). In cooperation with DHX15 seems to mediate the transition of the U2, U5 and U6 snRNP-containing IL complex to the snRNP-free IS complex leading to efficient debranching and turnover of excised introns. May play a role in the differentiation of ameloblasts and odontoblasts or in the forming of the enamel extracellular matrix. This chain is Tuftelin-interacting protein 11 (TFIP11), found in Macaca mulatta (Rhesus macaque).